Consider the following 214-residue polypeptide: DELTA-actitoxin-Aeq1b (214 aa).

A signal peptide spans 1–19 (MSRLIIVFIVVTMICAATA). Positions 20-35 (LSSKKSINEDEKDEKR) are excised as a propeptide. The segment at 38-47 (AVAGAVIEGA) is plays an important role in the hemolytic activity. The tract at residues 46-65 (GATLTFNVLQTVLKALGDIS) is N-terminal region. Phosphocholine is bound by residues Ser89, Val122, Ser140, Pro142, Tyr168, Tyr172, and Tyr173. Residues 140-155 (SIPFDYNLYSNWWNVK) are trp-rich region, which is important for the binding to lipid membrane. The short motif at 179–181 (RGD) is the Cell attachment site, crucial for protein stability element.

Belongs to the actinoporin family. Sea anemone subfamily. As to quaternary structure, octamer or nonamer in membranes. Monomer in the soluble state.

It localises to the secreted. The protein resides in the nematocyst. The protein localises to the target cell membrane. Functionally, pore-forming protein that forms cations-selective hydrophilic pores of around 1 nm and causes cytolysis. Pore formation is a multi-step process that involves specific recognition of membrane sphingomyelin (but neither cholesterol nor phosphatidylcholine) using aromatic rich region and adjacent phosphocholine (POC) binding site, firm binding to the membrane (mainly driven by hydrophobic interactions) accompanied by the transfer of the N-terminal region to the lipid-water interface and finally pore formation after oligomerization of monomers. The polypeptide is DELTA-actitoxin-Aeq1b (Actinia equina (Beadlet anemone)).